The primary structure comprises 193 residues: Peptide deformylase 2 (193 aa).

Cys-100 and His-142 together coordinate Fe cation. Glu-143 is an active-site residue. His-146 provides a ligand contact to Fe cation.

This sequence belongs to the polypeptide deformylase family. Requires Fe(2+) as cofactor.

The catalysed reaction is N-terminal N-formyl-L-methionyl-[peptide] + H2O = N-terminal L-methionyl-[peptide] + formate. Functionally, removes the formyl group from the N-terminal Met of newly synthesized proteins. Requires at least a dipeptide for an efficient rate of reaction. N-terminal L-methionine is a prerequisite for activity but the enzyme has broad specificity at other positions. The polypeptide is Peptide deformylase 2 (Corynebacterium efficiens (strain DSM 44549 / YS-314 / AJ 12310 / JCM 11189 / NBRC 100395)).